The sequence spans 122 residues: NADPH-dependent 7-cyano-7-deazaguanine reductase (122 aa).

C34 functions as the Thioimide intermediate in the catalytic mechanism. Residue D41 is the Proton donor of the active site. Substrate is bound by residues 56–58 and 75–76; these read VEL and HE.

Belongs to the GTP cyclohydrolase I family. QueF type 1 subfamily.

Its subcellular location is the cytoplasm. It catalyses the reaction 7-aminomethyl-7-carbaguanine + 2 NADP(+) = 7-cyano-7-deazaguanine + 2 NADPH + 3 H(+). The protein operates within tRNA modification; tRNA-queuosine biosynthesis. Functionally, catalyzes the NADPH-dependent reduction of 7-cyano-7-deazaguanine (preQ0) to 7-aminomethyl-7-deazaguanine (preQ1). The sequence is that of NADPH-dependent 7-cyano-7-deazaguanine reductase from Anaeromyxobacter dehalogenans (strain 2CP-C).